An 87-amino-acid polypeptide reads, in one-letter code: Exodeoxyribonuclease 7 small subunit (87 aa).

The protein belongs to the XseB family. In terms of assembly, heterooligomer composed of large and small subunits.

It localises to the cytoplasm. It catalyses the reaction Exonucleolytic cleavage in either 5'- to 3'- or 3'- to 5'-direction to yield nucleoside 5'-phosphates.. Its function is as follows. Bidirectionally degrades single-stranded DNA into large acid-insoluble oligonucleotides, which are then degraded further into small acid-soluble oligonucleotides. The chain is Exodeoxyribonuclease 7 small subunit from Xanthomonas campestris pv. campestris (strain 8004).